The chain runs to 21 residues: thr operon leader peptide (21 aa).

This sequence belongs to the thr operon leader peptide family.

In terms of biological role, this protein is involved in control of the biosynthesis of threonine. This is thr operon leader peptide from Shigella boydii serotype 18 (strain CDC 3083-94 / BS512).